Consider the following 225-residue polypeptide: Putative amino-acid transporter YggA (225 aa).

5 helical membrane-spanning segments follow: residues 1-21 (MFATTLQGFTLGLAMIIPIGA), 37-57 (LLTATLCCLCDLVLIGIGVFG), 65-85 (SPIGLALLTWGGVLFLGWFGI), 116-136 (LGVTLLNPHVYLDTLMLLGSF), and 150-170 (AVAMLASLVWFYSLAFGAVVL).

Belongs to the LysE/ArgO transporter (TC 2.A.75) family.

It is found in the cell membrane. The protein is Putative amino-acid transporter YggA of Aeromonas hydrophila.